The primary structure comprises 442 residues: UDP-N-acetylmuramoylalanine--D-glutamate ligase (442 aa).

113–119 is a binding site for ATP; the sequence is GSNGKTT.

This sequence belongs to the MurCDEF family.

The protein resides in the cytoplasm. The enzyme catalyses UDP-N-acetyl-alpha-D-muramoyl-L-alanine + D-glutamate + ATP = UDP-N-acetyl-alpha-D-muramoyl-L-alanyl-D-glutamate + ADP + phosphate + H(+). It participates in cell wall biogenesis; peptidoglycan biosynthesis. Its function is as follows. Cell wall formation. Catalyzes the addition of glutamate to the nucleotide precursor UDP-N-acetylmuramoyl-L-alanine (UMA). In Coxiella burnetii (strain Dugway 5J108-111), this protein is UDP-N-acetylmuramoylalanine--D-glutamate ligase.